Here is a 292-residue protein sequence, read N- to C-terminus: 5,10-methylenetetrahydrofolate reductase (292 aa).

The active-site Proton donor/acceptor is the Glu-26. Thr-57 contacts NADH. FAD is bound by residues Tyr-58, Ala-60, His-86, Arg-116, Gly-117, Asp-118, Ala-130, Tyr-150, His-154, Ala-157, Asp-163, Asn-166, Arg-169, and Lys-170. Asp-118 serves as a coordination point for (6S)-5-methyl-5,6,7,8-tetrahydrofolate. Residue Gln-181 coordinates NADH. (6S)-5-methyl-5,6,7,8-tetrahydrofolate is bound by residues Gln-181, Gln-217, and Arg-277.

Belongs to the methylenetetrahydrofolate reductase family. The cofactor is FAD.

It carries out the reaction (6S)-5-methyl-5,6,7,8-tetrahydrofolate + NAD(+) = (6R)-5,10-methylene-5,6,7,8-tetrahydrofolate + NADH + H(+). The protein operates within one-carbon metabolism; tetrahydrofolate interconversion. It participates in amino-acid biosynthesis; L-methionine biosynthesis via de novo pathway. Functionally, catalyzes the NADH-dependent reduction of 5,10-methylenetetrahydrofolate to 5-methyltetrahydrofolate. Is required to provide the methyl group necessary for methionine synthetase to convert homocysteine to methionine; the methyl group is given by 5-methyltetrahydrofolate. The sequence is that of 5,10-methylenetetrahydrofolate reductase (metF) from Neisseria meningitidis serogroup B (strain ATCC BAA-335 / MC58).